The chain runs to 106 residues: UPF0145 protein CPE0882 (106 aa).

This sequence belongs to the UPF0145 family.

The polypeptide is UPF0145 protein CPE0882 (Clostridium perfringens (strain 13 / Type A)).